Here is a 412-residue protein sequence, read N- to C-terminus: Tyrosine--tRNA ligase (412 aa).

Residue tyrosine 31 coordinates L-tyrosine. Positions 36-45 match the 'HIGH' region motif; the sequence is PTAPSLHIGH. Residues tyrosine 162 and glutamine 166 each contribute to the L-tyrosine site. Residues 222-226 carry the 'KMSKS' region motif; that stretch reads KIGKT. Lysine 225 is an ATP binding site. An S4 RNA-binding domain is found at 345 to 411; the sequence is KRWLDIVVEL…GKRKKQVIDL (67 aa).

It belongs to the class-I aminoacyl-tRNA synthetase family. TyrS type 1 subfamily. Homodimer.

It is found in the cytoplasm. It catalyses the reaction tRNA(Tyr) + L-tyrosine + ATP = L-tyrosyl-tRNA(Tyr) + AMP + diphosphate + H(+). Its function is as follows. Catalyzes the attachment of tyrosine to tRNA(Tyr) in a two-step reaction: tyrosine is first activated by ATP to form Tyr-AMP and then transferred to the acceptor end of tRNA(Tyr). The sequence is that of Tyrosine--tRNA ligase from Chlamydia trachomatis serovar A (strain ATCC VR-571B / DSM 19440 / HAR-13).